Reading from the N-terminus, the 391-residue chain is Alkanesulfonate monooxygenase (391 aa).

This sequence belongs to the SsuD family.

It catalyses the reaction an alkanesulfonate + FMNH2 + O2 = an aldehyde + FMN + sulfite + H2O + 2 H(+). Its function is as follows. Catalyzes the desulfonation of aliphatic sulfonates. This chain is Alkanesulfonate monooxygenase, found in Paracidovorax citrulli (strain AAC00-1) (Acidovorax citrulli).